The sequence spans 765 residues: 5-methyltetrahydropteroyltriglutamate--homocysteine methyltransferase 2 (765 aa).

Residues Lys18 and Asn116 each coordinate 5-methyltetrahydropteroyltri-L-glutamate. L-homocysteine contacts are provided by residues 437–439 (IGS) and Glu490. L-methionine is bound by residues 437 to 439 (IGS) and Glu490. 5-methyltetrahydropteroyltri-L-glutamate is bound by residues Asp495, Tyr518, 521 to 522 (RC), and Trp567. Position 605 (Asp605) interacts with L-homocysteine. An L-methionine-binding site is contributed by Asp605. Residues His647, Cys649, His658, Asp662, and Glu671 each coordinate Zn(2+). The Proton donor role is filled by His701. Cys733 lines the Zn(2+) pocket.

The protein belongs to the vitamin-B12 independent methionine synthase family. Requires Zn(2+) as cofactor. Expressed in leaves, stems and siliques.

It localises to the cytoplasm. It is found in the cytosol. It carries out the reaction 5-methyltetrahydropteroyltri-L-glutamate + L-homocysteine = tetrahydropteroyltri-L-glutamate + L-methionine. It participates in amino-acid biosynthesis; L-methionine biosynthesis via de novo pathway; L-methionine from L-homocysteine (MetE route): step 1/1. Its function is as follows. Catalyzes the transfer of a methyl group from 5-methyltetrahydrofolate to homocysteine resulting in methionine formation. The polypeptide is 5-methyltetrahydropteroyltriglutamate--homocysteine methyltransferase 2 (MS2) (Arabidopsis thaliana (Mouse-ear cress)).